A 142-amino-acid polypeptide reads, in one-letter code: Ribosome maturation factor RimP (142 aa).

The protein belongs to the RimP family.

It localises to the cytoplasm. Required for maturation of 30S ribosomal subunits. In Sulfurovum sp. (strain NBC37-1), this protein is Ribosome maturation factor RimP.